The chain runs to 225 residues: Small ribosomal subunit protein uS3 (225 aa).

A KH type-2 domain is found at 38–106 (IRKFIQSRFS…PVNLNIIEVK (69 aa)).

The protein belongs to the universal ribosomal protein uS3 family. As to quaternary structure, part of the 30S ribosomal subunit. Forms a tight complex with proteins S10 and S14.

Functionally, binds the lower part of the 30S subunit head. Binds mRNA in the 70S ribosome, positioning it for translation. The protein is Small ribosomal subunit protein uS3 of Leptospira borgpetersenii serovar Hardjo-bovis (strain JB197).